The chain runs to 264 residues: Teichoic acids export ATP-binding protein TagH (264 aa).

The ABC transporter domain maps to 5–243 (VNIKNVTKEY…YEAFLNDFKK (239 aa)). 57–64 (GINGSGKS) is an ATP binding site.

The protein belongs to the ABC transporter superfamily. Teichoic acids exporter (TC 3.A.1.104.1) family. As to quaternary structure, the complex is composed of two ATP-binding proteins (TagH) and two transmembrane proteins (TagG).

It is found in the cell membrane. The enzyme catalyses ATP + H2O + teichoic acidSide 1 = ADP + phosphate + teichoic acidSide 2.. In terms of biological role, part of the ABC transporter complex TagGH involved in teichoic acids export. Responsible for energy coupling to the transport system. This is Teichoic acids export ATP-binding protein TagH from Staphylococcus aureus (strain USA300).